The chain runs to 92 residues: UPF0250 protein CGSHiEE_03170 (92 aa).

Belongs to the UPF0250 family.

The protein is UPF0250 protein CGSHiEE_03170 of Haemophilus influenzae (strain PittEE).